Reading from the N-terminus, the 465-residue chain is Ribulose bisphosphate carboxylase large chain (465 aa).

Position 4 is an N6,N6,N6-trimethyllysine (lysine 4). Substrate-binding residues include asparagine 113 and threonine 163. The active-site Proton acceptor is the lysine 165. Lysine 167 provides a ligand contact to substrate. The Mg(2+) site is built by lysine 191, aspartate 193, and glutamate 194. Lysine 191 is subject to N6-carboxylysine. Histidine 284 (proton acceptor) is an active-site residue. Substrate is bound by residues arginine 285, histidine 317, and serine 369.

Belongs to the RuBisCO large chain family. Type I subfamily. Heterohexadecamer of 8 large chains and 8 small chains; disulfide-linked. The disulfide link is formed within the large subunit homodimers. Mg(2+) is required as a cofactor. In terms of processing, the disulfide bond which can form in the large chain dimeric partners within the hexadecamer appears to be associated with oxidative stress and protein turnover.

Its subcellular location is the plastid. It is found in the chloroplast. It catalyses the reaction 2 (2R)-3-phosphoglycerate + 2 H(+) = D-ribulose 1,5-bisphosphate + CO2 + H2O. The enzyme catalyses D-ribulose 1,5-bisphosphate + O2 = 2-phosphoglycolate + (2R)-3-phosphoglycerate + 2 H(+). In terms of biological role, ruBisCO catalyzes two reactions: the carboxylation of D-ribulose 1,5-bisphosphate, the primary event in carbon dioxide fixation, as well as the oxidative fragmentation of the pentose substrate in the photorespiration process. Both reactions occur simultaneously and in competition at the same active site. This is Ribulose bisphosphate carboxylase large chain from Platytheca verticillata.